Consider the following 192-residue polypeptide: Putative 3-methyladenine DNA glycosylase (192 aa).

It belongs to the DNA glycosylase MPG family.

This is Putative 3-methyladenine DNA glycosylase from Methanoculleus marisnigri (strain ATCC 35101 / DSM 1498 / JR1).